The primary structure comprises 43 residues: METATLVAISISRSLVSFTGYALYTAFGQPSEQLRDPFEEHED.

A helical transmembrane segment spans residues 7-24 (VAISISRSLVSFTGYALY).

The protein belongs to the PsbN family.

It localises to the plastid. It is found in the chloroplast thylakoid membrane. In terms of biological role, may play a role in photosystem I and II biogenesis. In Ginkgo biloba (Ginkgo), this protein is Protein PsbN.